Reading from the N-terminus, the 260-residue chain is Global transcriptional regulator CodY (260 aa).

The GAF domain stretch occupies residues 1–159 (MPNLLEKTRK…SSTVVGIQLL (159 aa)). Positions 207 to 226 (ASVIADRIGITRSVIVNALR) form a DNA-binding region, H-T-H motif.

It belongs to the CodY family.

The protein localises to the cytoplasm. In terms of biological role, DNA-binding global transcriptional regulator which is involved in the adaptive response to starvation and acts by directly or indirectly controlling the expression of numerous genes in response to nutrient availability. During rapid exponential growth, CodY is highly active and represses genes whose products allow adaptation to nutrient depletion. This Streptococcus pyogenes serotype M4 (strain MGAS10750) protein is Global transcriptional regulator CodY.